The primary structure comprises 197 residues: Glycerol-3-phosphate acyltransferase (197 aa).

Transmembrane regions (helical) follow at residues 5–25 (IYIA…GLIL), 54–74 (GLAA…VIIA), 80–100 (AEAA…PVWL), 112–132 (IGVL…LWLA), and 153–173 (IFLW…LTLL).

The protein belongs to the PlsY family. In terms of assembly, probably interacts with PlsX.

It localises to the cell inner membrane. It catalyses the reaction an acyl phosphate + sn-glycerol 3-phosphate = a 1-acyl-sn-glycero-3-phosphate + phosphate. Its pathway is lipid metabolism; phospholipid metabolism. Functionally, catalyzes the transfer of an acyl group from acyl-phosphate (acyl-PO(4)) to glycerol-3-phosphate (G3P) to form lysophosphatidic acid (LPA). This enzyme utilizes acyl-phosphate as fatty acyl donor, but not acyl-CoA or acyl-ACP. This is Glycerol-3-phosphate acyltransferase from Rhodopseudomonas palustris (strain HaA2).